We begin with the raw amino-acid sequence, 665 residues long: MLWLTVSLTGFALLGVVAAQQIEGFYYPYHLLGLSDGCVETLNTTISSCSQVLGQQANLDSGAVRVLVAPDLNELCTTACVDDLKSLKTKIQSTCSKDDVMVKNDIAYPGSWKAQLESPFGYDDSLASDFSSQTSSCHATGFTFTTPTAYALNTTATPAPTPICQRTYTVLATDTCASIAQANKVATFGVVSLNNLGTGCEALVEGKTLCLPETCTLRKITRDDDCGQVVKDANTTIPRLIAWNPMLNPECSNFLDYIGYYICISCLLRTPGGSAKPIEGETAITAVPVPTNANAESQKNCAKWYVVQPGDGCADISVANGITLVDFYFLNSGVNRDCTNLWLGYAYCVKPVGNIQTYPGYPVTVPSTSFTRPPALTETSTETLVLPTPTYAPGTYDNCSDYSRGMPASWSDAAKLNSCSFIAHINGVTVSQLLQWNPSLSKDSCSLSRELYYCVRMGQPVSEPIDYDGTLCMNIQDDKDIVPGTISNCNCFSYVSGGLGKLYTTCEDIVSEFDYDVGHLVELNPWLTKANCTKELFADLSGPYDYRYFCISNTGDPLHQSPAKSQTRTIHTTSTVQRAVISTPSSVSMTNSAPATATSTGGPPAPTQDGAVSNCTKWHVVESGDGCWAIYTKYGITSDQLFEWNTKISKDCSNIWLGYAVCVGV.

A signal peptide spans 1 to 19 (MLWLTVSLTGFALLGVVAA). 2 N-linked (GlcNAc...) asparagine glycosylation sites follow: Asn-43 and Asn-153. LysM domains are found at residues 166 to 211 (RTYT…TLCL), 216 to 264 (TLRK…YICI), and 303 to 349 (KWYV…AYCV). Residue Asn-234 is glycosylated (N-linked (GlcNAc...) asparagine). Residue Asn-398 is glycosylated (N-linked (GlcNAc...) asparagine). The LysM 4 domain occupies 409-454 (SWSDAAKLNSCSFIAHINGVTVSQLLQWNPSLSKDSCSLSRELYYC). Residue Asn-531 is glycosylated (N-linked (GlcNAc...) asparagine). Positions 585–610 (SSVSMTNSAPATATSTGGPPAPTQDG) are disordered. Over residues 592–602 (SAPATATSTGG) the composition is skewed to low complexity. Residue Asn-614 is glycosylated (N-linked (GlcNAc...) asparagine). Residues 617–663 (KWHVVESGDGCWAIYTKYGITSDQLFEWNTKISKDCSNIWLGYAVCV) enclose the LysM 5 domain.

Belongs to the secreted LysM effector family.

Its function is as follows. Might have a role in sequestration of chitin oligosaccharides (breakdown products of fungal cell walls that are released during invasion and act as triggers of host immunity) to dampen host defense. The protein is Secreted LysM effector Lys3 of Pochonia chlamydosporia (strain 123) (Metacordyceps chlamydosporia).